The sequence spans 105 residues: Plastocyanin (105 aa).

A Plastocyanin-like domain is found at 1–105 (ETYTVKLGSD…GMVGKITVAG (105 aa)). Cu(2+) contacts are provided by H39, C89, H92, and M97.

It belongs to the plastocyanin family. Requires Cu(2+) as cofactor.

Its subcellular location is the cellular thylakoid membrane. Participates in electron transfer between P700 and the cytochrome b6-f complex in photosystem I. The polypeptide is Plastocyanin (petE) (Anabaena variabilis).